The chain runs to 229 residues: 5'-methylthioadenosine/S-adenosylhomocysteine nucleosidase (229 aa).

The active-site Proton acceptor is the Glu12. Substrate is bound by residues Gly78, Met152, and Met173–Glu174. The active-site Proton donor is the Asp197.

The protein belongs to the PNP/UDP phosphorylase family. MtnN subfamily.

The enzyme catalyses S-adenosyl-L-homocysteine + H2O = S-(5-deoxy-D-ribos-5-yl)-L-homocysteine + adenine. It carries out the reaction S-methyl-5'-thioadenosine + H2O = 5-(methylsulfanyl)-D-ribose + adenine. It catalyses the reaction 5'-deoxyadenosine + H2O = 5-deoxy-D-ribose + adenine. Its pathway is amino-acid biosynthesis; L-methionine biosynthesis via salvage pathway; S-methyl-5-thio-alpha-D-ribose 1-phosphate from S-methyl-5'-thioadenosine (hydrolase route): step 1/2. In terms of biological role, catalyzes the irreversible cleavage of the glycosidic bond in both 5'-methylthioadenosine (MTA) and S-adenosylhomocysteine (SAH/AdoHcy) to adenine and the corresponding thioribose, 5'-methylthioribose and S-ribosylhomocysteine, respectively. Also cleaves 5'-deoxyadenosine, a toxic by-product of radical S-adenosylmethionine (SAM) enzymes, into 5-deoxyribose and adenine. In Oceanobacillus iheyensis (strain DSM 14371 / CIP 107618 / JCM 11309 / KCTC 3954 / HTE831), this protein is 5'-methylthioadenosine/S-adenosylhomocysteine nucleosidase.